Consider the following 213-residue polypeptide: UPF0301 protein Aave_0907 (213 aa).

The interval 93–120 (MGPSSGKQAAGEGGAQAEGEGAEESAYA) is disordered.

It belongs to the UPF0301 (AlgH) family.

The chain is UPF0301 protein Aave_0907 from Paracidovorax citrulli (strain AAC00-1) (Acidovorax citrulli).